The primary structure comprises 161 residues: Nucleotide-binding protein Gbem_0619 (161 aa).

This sequence belongs to the YajQ family.

In terms of biological role, nucleotide-binding protein. The sequence is that of Nucleotide-binding protein Gbem_0619 from Citrifermentans bemidjiense (strain ATCC BAA-1014 / DSM 16622 / JCM 12645 / Bem) (Geobacter bemidjiensis).